Reading from the N-terminus, the 322-residue chain is Nitrilase (322 aa).

The CN hydrolase domain occupies 5–283; that stretch reads VRVGAVQSEP…EAILTADIDL (279 aa). The active-site Proton acceptor is glutamate 45. Residue lysine 127 is part of the active site. The Nucleophile role is filled by cysteine 162.

This sequence belongs to the carbon-nitrogen hydrolase superfamily. Nitrilase family.

It catalyses the reaction a nitrile + 2 H2O = a carboxylate + NH4(+). Functionally, nitrilase that hydrolyzes preferentially 4-cyanopyridine. The protein is Nitrilase of Talaromyces marneffei (strain ATCC 18224 / CBS 334.59 / QM 7333) (Penicillium marneffei).